Consider the following 557-residue polypeptide: Glutamyl-tRNA(Gln) amidotransferase subunit B, mitochondrial (557 aa).

A mitochondrion-targeting transit peptide spans 1–41 (MAAPMLRWGCRGRRWAFARVDGGSCHRRGAPTGSTSNQIRG). The tract at residues 26–45 (HRRGAPTGSTSNQIRGESSV) is disordered. Polar residues predominate over residues 32–45 (TGSTSNQIRGESSV). At K529 the chain carries N6-succinyllysine.

Belongs to the GatB/GatE family. GatB subfamily. In terms of assembly, subunit of the heterotrimeric GatCAB amidotransferase (AdT) complex, composed of A (QRSL1), B (GATB) and C (GATC) subunits. In terms of tissue distribution, predominantly expressed in tissues characterized by high rates of oxidative phosphorylation (OxPhos), including muscle and heart.

Its subcellular location is the mitochondrion. The catalysed reaction is L-glutamyl-tRNA(Gln) + L-glutamine + ATP + H2O = L-glutaminyl-tRNA(Gln) + L-glutamate + ADP + phosphate + H(+). Allows the formation of correctly charged Gln-tRNA(Gln) through the transamidation of misacylated Glu-tRNA(Gln) in the mitochondria. The reaction takes place in the presence of glutamine and ATP through an activated gamma-phospho-Glu-tRNA(Gln). The sequence is that of Glutamyl-tRNA(Gln) amidotransferase subunit B, mitochondrial from Homo sapiens (Human).